The sequence spans 119 residues: Photosystem II extrinsic protein V (119 aa).

Residues Cys36, Cys39, and His40 each contribute to the heme c site.

This sequence belongs to the cytochrome c family. PsbV subfamily. PSII is composed of 1 copy each of membrane proteins PsbA, PsbB, PsbC, PsbD, PsbE, PsbF, PsbH, PsbI, PsbJ, PsbK, PsbL, PsbM, PsbT, PsbX, PsbY, PsbZ, Psb30/Ycf12, peripheral proteins PsbO, CyanoQ (PsbQ), PsbU, PsbV and a large number of cofactors. It forms dimeric complexes. Heme c is required as a cofactor.

Its subcellular location is the cellular thylakoid membrane. In terms of biological role, one of the extrinsic, lumenal subunits of photosystem II (PSII). PSII is a light-driven water plastoquinone oxidoreductase, using light energy to abstract electrons from H(2)O, generating a proton gradient subsequently used for ATP formation. The extrinsic proteins stabilize the structure of photosystem II oxygen-evolving complex (OEC), the ion environment of oxygen evolution and protect the OEC against heat-induced inactivation. Low-potential cytochrome c that plays a role in the OEC of PSII. The polypeptide is Photosystem II extrinsic protein V (psbV) (Aphanizomenon flos-aquae).